Here is a 361-residue protein sequence, read N- to C-terminus: tRNA-specific 2-thiouridylase MnmA (361 aa).

Residues 8 to 15 (GMSGGVDS) and Met34 contribute to the ATP site. Residues 94-96 (NPD) are interaction with target base in tRNA. The active-site Nucleophile is the Cys99. Cys99 and Cys195 form a disulfide bridge. Gly123 is a binding site for ATP. The interval 145 to 147 (KDQ) is interaction with tRNA. Catalysis depends on Cys195, which acts as the Cysteine persulfide intermediate. The interval 307–308 (RY) is interaction with tRNA.

It belongs to the MnmA/TRMU family.

It is found in the cytoplasm. It carries out the reaction S-sulfanyl-L-cysteinyl-[protein] + uridine(34) in tRNA + AH2 + ATP = 2-thiouridine(34) in tRNA + L-cysteinyl-[protein] + A + AMP + diphosphate + H(+). Functionally, catalyzes the 2-thiolation of uridine at the wobble position (U34) of tRNA, leading to the formation of s(2)U34. This is tRNA-specific 2-thiouridylase MnmA from Legionella pneumophila (strain Lens).